We begin with the raw amino-acid sequence, 402 residues long: LIM/homeobox protein Lhx5 (402 aa).

2 LIM zinc-binding domains span residues 3 to 61 (VHCA…RRFG) and 62 to 125 (TKCA…SSSL). Positions 124 to 148 (SLKEGSLNSVSSCTDRSLSPDLQDP) are enriched in low complexity. Disordered regions lie at residues 124-186 (SLKE…PRTT) and 298-402 (HGPP…AAVW). A compositionally biased stretch (basic and acidic residues) spans 151-167 (DDPKETDNSTSSDKETA). Residues 180–239 (RRGPRTTIKAKQLETLKAAFAATPKPTRHIREQLAQETGLNMRVIQVWFQNRRSKERRMK) constitute a DNA-binding region (homeobox). 2 stretches are compositionally biased toward low complexity: residues 300 to 311 (PPSQAQSPADSS) and 322 to 336 (PLGA…PHGA).

The protein resides in the nucleus. Plays an essential role in the regulation of neuronal differentiation and migration during development of the central nervous system. The sequence is that of LIM/homeobox protein Lhx5 (Lhx5) from Mus musculus (Mouse).